The chain runs to 314 residues: tRNA dimethylallyltransferase (314 aa).

An ATP-binding site is contributed by 14–21; sequence GPTASGKT. 16 to 21 contributes to the substrate binding site; that stretch reads TASGKT. Interaction with substrate tRNA stretches follow at residues 39-42, 163-167, and 245-250; these read DSAQ, QRLQR, and RCVGYR.

Belongs to the IPP transferase family. Monomer. The cofactor is Mg(2+).

The enzyme catalyses adenosine(37) in tRNA + dimethylallyl diphosphate = N(6)-dimethylallyladenosine(37) in tRNA + diphosphate. Functionally, catalyzes the transfer of a dimethylallyl group onto the adenine at position 37 in tRNAs that read codons beginning with uridine, leading to the formation of N6-(dimethylallyl)adenosine (i(6)A). In Dechloromonas aromatica (strain RCB), this protein is tRNA dimethylallyltransferase.